We begin with the raw amino-acid sequence, 371 residues long: Solute carrier family 35 member F6 (371 aa).

An N-terminal signal peptide occupies residues 1–25 (MAWTKHQLFLAGLMLVTGSINTLSA). 2 consecutive transmembrane segments (helical) span residues 48–68 (FLQA…FYLL) and 89–109 (LLFL…YVAL). Residues 104–160 (LMYVALNMTSASSFQMLRGAVIIFTGLFSVAFLGRRLVLSQWLGILATIAGLVVVGL) enclose the EamA domain. Asn-110 is a glycosylation site (N-linked (GlcNAc...) asparagine). The next 7 helical transmembrane spans lie at 117 to 137 (FQML…AFLG), 140 to 160 (LVLS…VVGL), 176 to 196 (VITG…QMVL), 216 to 236 (GLFG…IPAG), 261 to 281 (LIAV…FAGI), 295 to 312 (LDSL…ALGW), and 317 to 336 (ALQI…YNGL). Residues 347-371 (GRPPAEESEQERLLGGSRTPINDAS) form a disordered region. Thr-365 bears the Phosphothreonine mark.

This sequence belongs to the SLC35F solute transporter family. As to quaternary structure, interacts with SLC25A5.

Its subcellular location is the mitochondrion. It is found in the lysosome membrane. Its function is as follows. Involved in the maintenance of mitochondrial membrane potential in pancreatic ductal adenocarcinoma (PDAC) cells. Promotes pancreatic ductal adenocarcinoma (PDAC) cell growth. May play a role as a nucleotide-sugar transporter. In Pongo abelii (Sumatran orangutan), this protein is Solute carrier family 35 member F6 (SLC35F6).